We begin with the raw amino-acid sequence, 136 residues long: uncharacterized protein (136 aa).

This is an uncharacterized protein from Fowl adenovirus A serotype 1 (strain CELO / Phelps) (FAdV-1).